We begin with the raw amino-acid sequence, 181 residues long: TATA-box-binding protein (181 aa).

2 tandem repeats follow at residues 7–83 and 98–173.

Belongs to the TBP family.

Functionally, general factor that plays a role in the activation of archaeal genes transcribed by RNA polymerase. Binds specifically to the TATA box promoter element which lies close to the position of transcription initiation. The protein is TATA-box-binding protein of Methanococcus vannielii (strain ATCC 35089 / DSM 1224 / JCM 13029 / OCM 148 / SB).